Reading from the N-terminus, the 134-residue chain is uncharacterized protein (134 aa).

Residues 1–23 form the signal peptide; that stretch reads MWHLRCSNWRGSGVFGMCFSLSG. Cys-24 is lipidated: N-palmitoyl cysteine. A lipid anchor (S-diacylglycerol cysteine) is attached at Cys-24.

The protein localises to the cell membrane. This is an uncharacterized protein from Treponema pallidum (strain Nichols).